A 197-amino-acid polypeptide reads, in one-letter code: Large ribosomal subunit protein bL9c (197 aa).

The transit peptide at 1–42 (MASSTALSLSWSSSPCWSHSFNGGANETLKVSERRFNFEVVS) directs the protein to the chloroplast.

The protein belongs to the bacterial ribosomal protein bL9 family. In terms of assembly, part of the 50S ribosomal subunit.

The protein localises to the plastid. Its subcellular location is the chloroplast. Its function is as follows. Binds to the 23S rRNA. This chain is Large ribosomal subunit protein bL9c (RPL9), found in Arabidopsis thaliana (Mouse-ear cress).